A 1041-amino-acid polypeptide reads, in one-letter code: Pre-mRNA-splicing factor ATP-dependent RNA helicase DHX16 (1041 aa).

Disordered regions lie at residues 101 to 207 (EDSE…AYEE) and 371 to 391 (LQGD…QKES). 3 positions are modified to phosphoserine: S103, S106, and S107. Residues 119-130 (QKKRKKRKHLRK) show a composition bias toward basic residues. S160 is modified (phosphoserine). The span at 166-207 (RTERERLQDLEERDAFAERVRQRDKDRTRNVLERSDKKAYEE) shows a compositional bias: basic and acidic residues. The span at 381–391 (PTSTQAQQKES) shows a compositional bias: polar residues. The Helicase ATP-binding domain occupies 409 to 573 (LAAIANHQVL…FDDAPVFRIP (165 aa)). 422-429 (GETGSGKT) serves as a coordination point for ATP. Positions 520–523 (DEAH) match the DEAH box motif. Positions 598–771 (SVLQIHVTQP…NVVLLLKSLG (174 aa)) constitute a Helicase C-terminal domain. Phosphothreonine is present on T712.

Belongs to the DEAD box helicase family. DEAH subfamily. DDX16/PRP8 sub-subfamily. Component of pre-catalytic spliceosome complexes. Component of the minor spliceosome, which splices U12-type introns. Interacts with GPKOW. Interacts with TRIM6. Interacts with RIGI. Expressed in the spleen, thyroid and testis. Also expressed in the brain and cerebellum.

The protein localises to the nucleus. It localises to the nucleoplasm. It is found in the cytoplasm. It catalyses the reaction ATP + H2O = ADP + phosphate + H(+). In terms of biological role, required for pre-mRNA splicing as a component of the spliceosome. Contributes to pre-mRNA splicing after spliceosome formation and prior to the first transesterification reaction. As a component of the minor spliceosome, involved in the splicing of U12-type introns in pre-mRNAs. Also plays a role in innate antiviral response by acting as a pattern recognition receptor sensing splicing signals in viral RNA. Mechanistically, TRIM6 promotes the interaction between unanchored 'Lys-48'-polyubiquitin chains and DHX16, leading to DHX16 interaction with RIGI and ssRNA to amplify RIGI-dependent innate antiviral immune responses. The chain is Pre-mRNA-splicing factor ATP-dependent RNA helicase DHX16 (DHX16) from Homo sapiens (Human).